We begin with the raw amino-acid sequence, 495 residues long: Bifunctional protein GlmU (495 aa).

The pyrophosphorylase stretch occupies residues 1–241; that stretch reads MPQQTAVVVL…AAKVTGVNDR (241 aa). UDP-N-acetyl-alpha-D-glucosamine is bound by residues 10–13, Lys-24, Gln-81, and 86–87; these read LAAG and GT. A Mg(2+)-binding site is contributed by Asp-112. Residues Gly-151, Glu-166, Asn-181, and Asn-239 each contribute to the UDP-N-acetyl-alpha-D-glucosamine site. A Mg(2+)-binding site is contributed by Asn-239. Residues 242–262 are linker; sequence VQLSIATRTMNRYILERHMRA. Residues 263–495 form an N-acetyltransferase region; sequence GVTIIDPAST…QATEQKDGEQ (233 aa). UDP-N-acetyl-alpha-D-glucosamine-binding residues include Arg-344 and Lys-362. The active-site Proton acceptor is His-374. Residues Tyr-377 and Asn-388 each contribute to the UDP-N-acetyl-alpha-D-glucosamine site. Acetyl-CoA-binding positions include Ala-391, 397 to 398, Ser-416, and Ala-434; that span reads NY. A disordered region spans residues 467-495; that stretch reads GTAAATAAAQALAADEKSSQATEQKDGEQ. Low complexity predominate over residues 468-479; that stretch reads TAAATAAAQALA. The segment covering 480 to 495 has biased composition (basic and acidic residues); it reads ADEKSSQATEQKDGEQ.

This sequence in the N-terminal section; belongs to the N-acetylglucosamine-1-phosphate uridyltransferase family. It in the C-terminal section; belongs to the transferase hexapeptide repeat family. Homotrimer. Mg(2+) is required as a cofactor.

The protein localises to the cytoplasm. It carries out the reaction alpha-D-glucosamine 1-phosphate + acetyl-CoA = N-acetyl-alpha-D-glucosamine 1-phosphate + CoA + H(+). The catalysed reaction is N-acetyl-alpha-D-glucosamine 1-phosphate + UTP + H(+) = UDP-N-acetyl-alpha-D-glucosamine + diphosphate. It functions in the pathway nucleotide-sugar biosynthesis; UDP-N-acetyl-alpha-D-glucosamine biosynthesis; N-acetyl-alpha-D-glucosamine 1-phosphate from alpha-D-glucosamine 6-phosphate (route II): step 2/2. Its pathway is nucleotide-sugar biosynthesis; UDP-N-acetyl-alpha-D-glucosamine biosynthesis; UDP-N-acetyl-alpha-D-glucosamine from N-acetyl-alpha-D-glucosamine 1-phosphate: step 1/1. It participates in bacterial outer membrane biogenesis; LPS lipid A biosynthesis. In terms of biological role, catalyzes the last two sequential reactions in the de novo biosynthetic pathway for UDP-N-acetylglucosamine (UDP-GlcNAc). The C-terminal domain catalyzes the transfer of acetyl group from acetyl coenzyme A to glucosamine-1-phosphate (GlcN-1-P) to produce N-acetylglucosamine-1-phosphate (GlcNAc-1-P), which is converted into UDP-GlcNAc by the transfer of uridine 5-monophosphate (from uridine 5-triphosphate), a reaction catalyzed by the N-terminal domain. The sequence is that of Bifunctional protein GlmU from Nocardia farcinica (strain IFM 10152).